Consider the following 372-residue polypeptide: MEYGLDLEYSFNEFLKGFGLSSEIAHIIWLPLPMLLVLVAAVVGVLVTVWLERKISAAAQQRIGPEYAGALGVLQPIADGLKLLVKEDIIPAKADGILFTAGPILVLVPVILSWLIVPFGQNLLISNVGIGIFLWIALSSIQPIGLLMSGYASNNKYSLLGGLRAAAQSISYEIPLALSVLAIVLMTNSLSTIDIVNQQSGAGILSWNIWRQPVGFIVFWICALAECERLPFDLPEAEEELVAGYQTEYAGMKFALFYLGSYINLILSALLVSILYLGGWGFPVPVELIAKFLNLPINAPFLQVFTASIGIVMTVLKAYLLVFIAILLRWTTPRVRIDQLLDLGWKFLLPISLANLLITAGLKLAFPQFFGG.

The next 8 membrane-spanning stretches (helical) occupy residues 27–47 (IIWLPLPMLLVLVAAVVGVLV), 97–117 (ILFTAGPILVLVPVILSWLIV), 128–148 (VGIGIFLWIALSSIQPIGLLM), 176–196 (LALSVLAIVLMTNSLSTIDIV), 204–224 (ILSWNIWRQPVGFIVFWICAL), 266–286 (ILSALLVSILYLGGWGFPVPV), 308–328 (SIGIVMTVLKAYLLVFIAILL), and 347–367 (FLLPISLANLLITAGLKLAFP).

Belongs to the complex I subunit 1 family. In terms of assembly, NDH-1 is composed of at least 11 different subunits.

It is found in the cellular thylakoid membrane. The enzyme catalyses a plastoquinone + NADH + (n+1) H(+)(in) = a plastoquinol + NAD(+) + n H(+)(out). It carries out the reaction a plastoquinone + NADPH + (n+1) H(+)(in) = a plastoquinol + NADP(+) + n H(+)(out). NDH-1 shuttles electrons from an unknown electron donor, via FMN and iron-sulfur (Fe-S) centers, to quinones in the respiratory and/or the photosynthetic chain. The immediate electron acceptor for the enzyme in this species is believed to be plastoquinone. Couples the redox reaction to proton translocation, and thus conserves the redox energy in a proton gradient. In Prochlorococcus marinus (strain AS9601), this protein is NAD(P)H-quinone oxidoreductase subunit 1.